Reading from the N-terminus, the 660-residue chain is Macrolide export ATP-binding/permease protein MacB (660 aa).

The ABC transporter domain occupies 10–248; that stretch reads LVLENIVRKF…AKGQALQGKQ (239 aa). An ATP-binding site is contributed by 46–53; sequence GASGSGKS. 4 helical membrane passes run 285 to 305, 532 to 552, 593 to 613, and 625 to 645; these read FLTM…VALG, ILTL…GIGV, IIGG…FVLF, and SIII…FSPA.

It belongs to the ABC transporter superfamily. Macrolide exporter (TC 3.A.1.122) family. In terms of assembly, homodimer.

The protein resides in the cell inner membrane. In terms of biological role, non-canonical ABC transporter that contains transmembrane domains (TMD), which form a pore in the inner membrane, and an ATP-binding domain (NBD), which is responsible for energy generation. Confers resistance against macrolides. The sequence is that of Macrolide export ATP-binding/permease protein MacB from Bartonella quintana (strain Toulouse) (Rochalimaea quintana).